Reading from the N-terminus, the 792-residue chain is 5-methyltetrahydropteroyltriglutamate--homocysteine methyltransferase (792 aa).

5-methyltetrahydropteroyltri-L-glutamate-binding positions include 16–19 (RELK) and lysine 112. Residues 432-434 (IGS) and glutamate 485 contribute to the L-homocysteine site. L-methionine-binding positions include 432–434 (IGS) and glutamate 485. 5-methyltetrahydropteroyltri-L-glutamate is bound by residues 516 to 517 (RC) and tryptophan 562. Aspartate 600 contributes to the L-homocysteine binding site. Residue aspartate 600 coordinates L-methionine. Residue glutamate 606 participates in 5-methyltetrahydropteroyltri-L-glutamate binding. Residues histidine 642, cysteine 644, and glutamate 666 each coordinate Zn(2+). Histidine 695 acts as the Proton donor in catalysis. Cysteine 727 contributes to the Zn(2+) binding site.

The protein belongs to the vitamin-B12 independent methionine synthase family. It depends on Zn(2+) as a cofactor.

It catalyses the reaction 5-methyltetrahydropteroyltri-L-glutamate + L-homocysteine = tetrahydropteroyltri-L-glutamate + L-methionine. It participates in amino-acid biosynthesis; L-methionine biosynthesis via de novo pathway; L-methionine from L-homocysteine (MetE route): step 1/1. Functionally, catalyzes the transfer of a methyl group from 5-methyltetrahydrofolate to homocysteine resulting in methionine formation. This chain is 5-methyltetrahydropteroyltriglutamate--homocysteine methyltransferase, found in Cupriavidus necator (Alcaligenes eutrophus).